Here is a 188-residue protein sequence, read N- to C-terminus: uncharacterized protein (188 aa).

A disordered region spans residues 57–80 (NDDVAPVAEGPKQERRSPSRNIGR).

Belongs to the transposase 25 family.

This is an uncharacterized protein from Sinorhizobium fredii (strain NBRC 101917 / NGR234).